The following is a 39-amino-acid chain: Beta-theraphotoxin-Cm2a (39 aa).

Cystine bridges form between Cys-7/Cys-21, Cys-14/Cys-26, and Cys-20/Cys-33. Phe-39 is subject to Phenylalanine amide.

In terms of tissue distribution, expressed by the venom gland.

It is found in the secreted. In terms of biological role, inhibits mammalian voltage-gated sodium channel subtypes Nav1.5/SCN5A and Nav1.8/SCN10A by shifting the voltage dependence of channel activation to more depolarized potentials and by blocking the inward component of the sodium current. In vivo, this toxin causes erect, elevated tail, initial partial ataxia, followed by recovery over approximately 1 hour after injection and the progressive development of shaking. Although paralysis subsides, the body tremors never cease and persist until the end of the experiment. The polypeptide is Beta-theraphotoxin-Cm2a (Ceratogyrus marshalli (Straighthorned baboon tarantula)).